Here is a 320-residue protein sequence, read N- to C-terminus: GMP reductase (320 aa).

Cys-174 serves as the catalytic Thioimidate intermediate. 203-226 (IIADGGLRVHGDIAKSIRMGASFC) contacts NADP(+).

It belongs to the IMPDH/GMPR family. GuaC type 2 subfamily.

The catalysed reaction is IMP + NH4(+) + NADP(+) = GMP + NADPH + 2 H(+). Functionally, catalyzes the irreversible NADPH-dependent deamination of GMP to IMP. It functions in the conversion of nucleobase, nucleoside and nucleotide derivatives of G to A nucleotides, and in maintaining the intracellular balance of A and G nucleotides. The protein is GMP reductase of Mycoplasma mycoides subsp. mycoides SC (strain CCUG 32753 / NCTC 10114 / PG1).